Reading from the N-terminus, the 369-residue chain is Probable dual-specificity RNA methyltransferase RlmN (369 aa).

The Proton acceptor role is filled by E106. The Radical SAM core domain maps to 118–354; that stretch reads EARRLTVCVS…VTVRRSRGQD (237 aa). C125 and C359 are oxidised to a cystine. Positions 132, 136, and 139 each coordinate [4Fe-4S] cluster. Residues 183 to 184, S215, 238 to 240, and N316 contribute to the S-adenosyl-L-methionine site; these read GE and SLH. The S-methylcysteine intermediate role is filled by C359.

The protein belongs to the radical SAM superfamily. RlmN family. [4Fe-4S] cluster serves as cofactor.

It localises to the cytoplasm. The catalysed reaction is adenosine(2503) in 23S rRNA + 2 reduced [2Fe-2S]-[ferredoxin] + 2 S-adenosyl-L-methionine = 2-methyladenosine(2503) in 23S rRNA + 5'-deoxyadenosine + L-methionine + 2 oxidized [2Fe-2S]-[ferredoxin] + S-adenosyl-L-homocysteine. It carries out the reaction adenosine(37) in tRNA + 2 reduced [2Fe-2S]-[ferredoxin] + 2 S-adenosyl-L-methionine = 2-methyladenosine(37) in tRNA + 5'-deoxyadenosine + L-methionine + 2 oxidized [2Fe-2S]-[ferredoxin] + S-adenosyl-L-homocysteine. In terms of biological role, specifically methylates position 2 of adenine 2503 in 23S rRNA and position 2 of adenine 37 in tRNAs. The sequence is that of Probable dual-specificity RNA methyltransferase RlmN from Salinibacter ruber (strain DSM 13855 / M31).